Here is a 388-residue protein sequence, read N- to C-terminus: Oxytocin receptor (388 aa).

Residues 1–38 (MEGTPAANWSIELDLGSGVPPGAEGNLTAGPPRRNEAL) are Extracellular-facing. N-linked (GlcNAc...) asparagine glycans are attached at residues N8 and N26. Residues 39–63 (ARVEVAVLCLILFLALSGNACVLLA) form a helical membrane-spanning segment. Over 64–74 (LRTTRHKHSRL) the chain is Cytoplasmic. The chain crosses the membrane as a helical span at residues 75 to 97 (FFFMKHLSIADLVVAVFQVLPQL). Over 98–113 (LWDITFRFYGPDLLCR) the chain is Extracellular. A disulfide bridge links C112 with C187. A helical membrane pass occupies residues 114-135 (LVKYLQVVGMFASTYLLLLMSL). Over 136–154 (DRCLAICQPLRSLRRRTDR) the chain is Cytoplasmic. The chain crosses the membrane as a helical span at residues 155–175 (LAVLATWLGCLVASVPQVHIF). The Extracellular portion of the chain corresponds to 176–202 (SLREVADGVFDCWAVFIQPWGPKAYVT). Residues 203-225 (WITLAVYIVPVIVLAACYGLISF) traverse the membrane as a helical segment. The Cytoplasmic portion of the chain corresponds to 226 to 274 (KIWQNLRLKTAAAAAAAEGSDAAGGAGRAALARVSSVKLISKAKIRTVK). A helical transmembrane segment spans residues 275-293 (MTFIIVLAFIVCWTPFFFV). Over 294-308 (QMWSVWDVNAPKEAS) the chain is Extracellular. A helical membrane pass occupies residues 309-331 (AFIIAMLLASLNSCCNPWIYMLF). At 332 to 388 (TGHLFHELVQRFLCCSARYLKGSRPGETSISKKSNSSTFVLSRRSSSQRSCSQPSSA) the chain is on the cytoplasmic side. Positions 354 to 388 (SRPGETSISKKSNSSTFVLSRRSSSQRSCSQPSSA) are disordered. A phosphoserine mark is found at S365 and S367. Positions 365 to 388 (SNSSTFVLSRRSSSQRSCSQPSSA) are enriched in low complexity.

Belongs to the G-protein coupled receptor 1 family. Vasopressin/oxytocin receptor subfamily.

The protein resides in the cell membrane. Receptor for oxytocin. The activity of this receptor is mediated by G proteins which activate a phosphatidylinositol-calcium second messenger system. The chain is Oxytocin receptor (Oxtr) from Mus musculus (Mouse).